The chain runs to 156 residues: ATP synthase subunit b 1 (156 aa).

The chain crosses the membrane as a helical span at residues 7–27 (LFLQAIVFAILVWFTMKFVWP).

It belongs to the ATPase B chain family. F-type ATPases have 2 components, F(1) - the catalytic core - and F(0) - the membrane proton channel. F(1) has five subunits: alpha(3), beta(3), gamma(1), delta(1), epsilon(1). F(0) has three main subunits: a(1), b(2) and c(10-14). The alpha and beta chains form an alternating ring which encloses part of the gamma chain. F(1) is attached to F(0) by a central stalk formed by the gamma and epsilon chains, while a peripheral stalk is formed by the delta and b chains.

The protein localises to the cell inner membrane. In terms of biological role, f(1)F(0) ATP synthase produces ATP from ADP in the presence of a proton or sodium gradient. F-type ATPases consist of two structural domains, F(1) containing the extramembraneous catalytic core and F(0) containing the membrane proton channel, linked together by a central stalk and a peripheral stalk. During catalysis, ATP synthesis in the catalytic domain of F(1) is coupled via a rotary mechanism of the central stalk subunits to proton translocation. Its function is as follows. Component of the F(0) channel, it forms part of the peripheral stalk, linking F(1) to F(0). The chain is ATP synthase subunit b 1 from Albidiferax ferrireducens (strain ATCC BAA-621 / DSM 15236 / T118) (Rhodoferax ferrireducens).